Here is a 512-residue protein sequence, read N- to C-terminus: Anaerobic nitric oxide reductase transcription regulator NorR (512 aa).

One can recognise a Sigma-54 factor interaction domain in the interval 190–419 (MIGESLAMQE…LEHVISRAAV (230 aa)). ATP contacts are provided by residues 218-225 (GETGVGKE) and 281-290 (ADNGTLFLDE). Residues 487–506 (WAATARALQLDTGNLHRLAK) constitute a DNA-binding region (H-T-H motif).

The protein operates within nitrogen metabolism; nitric oxide reduction. Its function is as follows. Required for the expression of anaerobic nitric oxide (NO) reductase, acts as a transcriptional activator for at least the norVW operon. Activation also requires sigma-54. The chain is Anaerobic nitric oxide reductase transcription regulator NorR from Aliivibrio fischeri (strain ATCC 700601 / ES114) (Vibrio fischeri).